The sequence spans 339 residues: Neutrophil cytosol factor 4 (339 aa).

The PX domain occupies 19-140 (DVAVSANIAD…IFFYQSAYDA (122 aa)). A 1,2-diacyl-sn-glycero-3-phospho-(1D-myo-inositol-3-phosphate) contacts are provided by residues 58–60 (RYR) and 92–94 (KVY). Residue Thr154 is modified to Phosphothreonine. Positions 170–229 (MEAPRAEALFDFTGNSKLELSFKAGDVIFLLSKINKDWLEGTSQGATGIFPGSFVKILKD) constitute an SH3 domain. Positions 237–329 (TNWLRCYFYE…FPWKLHVTQK (93 aa)) constitute a PB1 domain. Position 315 is a phosphoserine (Ser315).

As to quaternary structure, component of the phagocyte NADPH oxidase complex composed of an obligatory core heterodimer formed by the membrane proteins CYBA and CYBB and the cytosolic regulatory subunits NCF1/p47-phox, NCF2/p67-phox, NCF4/p40-phox and the small GTPase RAC1 or RAC2. Part of a cytosolic complex composed at least by NCF1, NCF2 and NCF4. Interacts with NCF2. Interacts with NCF1. The NCF2-NCF4 complex interacts with GBP7 (via GB1/RHD3-type G domain).

The protein localises to the cytoplasm. It localises to the cytosol. It is found in the endosome membrane. Its subcellular location is the membrane. Its function is as follows. Subunit of the phagocyte NADPH oxidase complex that mediates the transfer of electrons from cytosolic NADPH to O2 to produce the superoxide anion (O2(-)). In the activated complex, electrons are first transferred from NADPH to flavin adenine dinucleotide (FAD) and subsequently transferred via two heme molecules to molecular oxygen, producing superoxide through an outer-sphere reaction. Activation of the NADPH oxidase complex is initiated by the assembly of cytosolic subunits of the NADPH oxidase complex with the core NADPH oxidase complex to form a complex at the plasma membrane or phagosomal membrane. This activation process is initiated by phosphorylation dependent binding of the cytosolic NCF1/p47-phox subunit to the C-terminus of CYBA/p22-phox. The polypeptide is Neutrophil cytosol factor 4 (Mus musculus (Mouse)).